A 76-amino-acid chain; its full sequence is uncharacterized protein (76 aa).

This is an uncharacterized protein from Mycobacterium tuberculosis (strain ATCC 25618 / H37Rv).